The primary structure comprises 229 residues: Uracil-DNA glycosylase (229 aa).

Residue Asp65 is the Proton acceptor of the active site.

Belongs to the uracil-DNA glycosylase (UDG) superfamily. UNG family.

The protein resides in the cytoplasm. The catalysed reaction is Hydrolyzes single-stranded DNA or mismatched double-stranded DNA and polynucleotides, releasing free uracil.. Excises uracil residues from the DNA which can arise as a result of misincorporation of dUMP residues by DNA polymerase or due to deamination of cytosine. The protein is Uracil-DNA glycosylase of Brevibacillus brevis (strain 47 / JCM 6285 / NBRC 100599).